An 84-amino-acid chain; its full sequence is Putative movement protein (84 aa).

Residues 15 to 35 (ALHGILVAFIAVLCLIGCLWA) form a helical membrane-spanning segment.

In terms of assembly, interacts with the capsid protein (CP). Part of a MP-CP-viral DNA complex.

It localises to the host membrane. Its function is as follows. Involved in the viral transport within, and between cells. The protein is Putative movement protein of Miscanthus streak virus (isolate 91) (MiSV).